The sequence spans 251 residues: MKKAGLLFLVMIVIAVVAAGIGYWKLTGEESDTLRKIVLEECLPNQQQNQNPSPCAEVKPNAGYVVLKDLNGPLQYLLMPTYRINGTESPLLTDPSTPNFFWLAWQARDFMSKKYGQPVPDRAVSLAINSRTGRTQNHFHIHISCIRPDVRKQLDNNLANISSRWLPLPGGLRGHEYLARRVTESELVQRSPFMMLAEEVPEAREHMGRYGLAMVRQSDNSFVLLATQRNLLTLNRASAEEIQDHQCEILR.

The helical transmembrane segment at 4-24 threads the bilayer; it reads AGLLFLVMIVIAVVAAGIGYW.

Belongs to the Cdh family.

It is found in the cell inner membrane. The catalysed reaction is a CDP-1,2-diacyl-sn-glycerol + H2O = a 1,2-diacyl-sn-glycero-3-phosphate + CMP + 2 H(+). It functions in the pathway phospholipid metabolism; CDP-diacylglycerol degradation; phosphatidate from CDP-diacylglycerol: step 1/1. The sequence is that of CDP-diacylglycerol pyrophosphatase from Escherichia coli (strain K12 / MC4100 / BW2952).